The primary structure comprises 356 residues: Anthranilate phosphoribosyltransferase (356 aa).

Residues Gly96, 99–100 (GD), Thr104, 106–109 (NIST), 124–132 (KHGNRSASG), and Ser136 each bind 5-phospho-alpha-D-ribose 1-diphosphate. Gly96 serves as a coordination point for anthranilate. Ser108 is a binding site for Mg(2+). Residue Asn127 participates in anthranilate binding. Residue Arg182 participates in anthranilate binding. 2 residues coordinate Mg(2+): Asp241 and Glu242.

The protein belongs to the anthranilate phosphoribosyltransferase family. As to quaternary structure, homodimer. Requires Mg(2+) as cofactor.

The enzyme catalyses N-(5-phospho-beta-D-ribosyl)anthranilate + diphosphate = 5-phospho-alpha-D-ribose 1-diphosphate + anthranilate. The protein operates within amino-acid biosynthesis; L-tryptophan biosynthesis; L-tryptophan from chorismate: step 2/5. Its function is as follows. Catalyzes the transfer of the phosphoribosyl group of 5-phosphorylribose-1-pyrophosphate (PRPP) to anthranilate to yield N-(5'-phosphoribosyl)-anthranilate (PRA). The chain is Anthranilate phosphoribosyltransferase from Trichodesmium erythraeum (strain IMS101).